Reading from the N-terminus, the 544-residue chain is Chaperonin GroEL 2 (544 aa).

Residues 30–33, Lys-51, 87–91, Gly-415, and Asp-496 each bind ATP; these read TLGP and DGTTT.

It belongs to the chaperonin (HSP60) family. As to quaternary structure, forms a cylinder of 14 subunits composed of two heptameric rings stacked back-to-back. Interacts with the co-chaperonin GroES.

It localises to the cytoplasm. It carries out the reaction ATP + H2O + a folded polypeptide = ADP + phosphate + an unfolded polypeptide.. Its function is as follows. Together with its co-chaperonin GroES, plays an essential role in assisting protein folding. The GroEL-GroES system forms a nano-cage that allows encapsulation of the non-native substrate proteins and provides a physical environment optimized to promote and accelerate protein folding. This chain is Chaperonin GroEL 2, found in Rhizobium johnstonii (strain DSM 114642 / LMG 32736 / 3841) (Rhizobium leguminosarum bv. viciae).